Consider the following 485-residue polypeptide: Peptidyl-prolyl cis-trans isomerase-like 4 (485 aa).

The PPIase cyclophilin-type domain maps to 1-172 (MSVLLETSAG…IDIRIKHTVI (172 aa)). The RRM domain occupies 251–329 (NVLFVCKLNP…RRIHVDFSQS (79 aa)). The segment at 377–485 (NYRMVYGEEE…RDENDRRSRR (109 aa)) is disordered. The segment covering 426-485 (RPRDRSRDRYHKPRDDRRGDRRDRDRRDQDRNRYRDRDHRDRGREKDRYGRDENDRRSRR) has biased composition (basic and acidic residues).

It belongs to the cyclophilin-type PPIase family. PPIL4 subfamily.

It is found in the nucleus. The enzyme catalyses [protein]-peptidylproline (omega=180) = [protein]-peptidylproline (omega=0). Its function is as follows. PPIases accelerate the folding of proteins. It catalyzes the cis-trans isomerization of proline imidic peptide bonds in oligopeptides. This is Peptidyl-prolyl cis-trans isomerase-like 4 (CYP6) from Gibberella zeae (strain ATCC MYA-4620 / CBS 123657 / FGSC 9075 / NRRL 31084 / PH-1) (Wheat head blight fungus).